The following is a 555-amino-acid chain: Glutamine--tRNA ligase (555 aa).

The short motif at 35-45 is the 'HIGH' region element; the sequence is PEPNGYLHIGH. ATP is bound by residues 36–38 and 42–48; these read EPN and HIGHAKS. Positions 68 and 213 each coordinate L-glutamine. Residues Thr-232, 262–263, and 270–272 contribute to the ATP site; these read RL and MSK. A 'KMSKS' region motif is present at residues 269–273; the sequence is VMSKR.

It belongs to the class-I aminoacyl-tRNA synthetase family. Monomer.

The protein resides in the cytoplasm. The enzyme catalyses tRNA(Gln) + L-glutamine + ATP = L-glutaminyl-tRNA(Gln) + AMP + diphosphate. In Photobacterium profundum (strain SS9), this protein is Glutamine--tRNA ligase.